We begin with the raw amino-acid sequence, 294 residues long: MKQLTLAKTVKGVGIGLHKGEPIEITLEPLEANSGIVFFRSDLNASYKASPENVINTQMATVLGDERGFISTIEHLMSAINAYGIDNVRIVLNANEAPVMDGSSISFCMMLDEAGVKELDVPKKIMVIKKPIEVRDGNKFVRLTPTKEPRINYTIKFDNAVIGEQSYNFEFSKKNYIENIARARTFGFLKDVQALRSMNLALGGSLENTIVVDENRILNPEGLRFKDEFVRHKILDAIGDLTLLGYRVFGDYTSYAGSHHLNHLLTKEVLKDKDAYEIVSLEKTTQKAYEKVFA.

The Zn(2+) site is built by His-75, His-232, and Asp-236. The active-site Proton donor is His-259.

The protein belongs to the LpxC family. Zn(2+) is required as a cofactor.

It carries out the reaction a UDP-3-O-[(3R)-3-hydroxyacyl]-N-acetyl-alpha-D-glucosamine + H2O = a UDP-3-O-[(3R)-3-hydroxyacyl]-alpha-D-glucosamine + acetate. It participates in glycolipid biosynthesis; lipid IV(A) biosynthesis; lipid IV(A) from (3R)-3-hydroxytetradecanoyl-[acyl-carrier-protein] and UDP-N-acetyl-alpha-D-glucosamine: step 2/6. Its function is as follows. Catalyzes the hydrolysis of UDP-3-O-myristoyl-N-acetylglucosamine to form UDP-3-O-myristoylglucosamine and acetate, the committed step in lipid A biosynthesis. This Campylobacter jejuni (strain RM1221) protein is UDP-3-O-acyl-N-acetylglucosamine deacetylase.